Reading from the N-terminus, the 1442-residue chain is CD109 antigen (1442 aa).

The first 21 residues, 1–21, serve as a signal peptide directing secretion; it reads MRSRRLLSAAHLLCLCAVALA. Asn67, Asn117, Asn246, Asn278, Asn370, and Asn421 each carry an N-linked (GlcNAc...) asparagine glycan. Residues 595–704 form a bait region (approximate) region; that stretch reads DKSVTLMENS…TWIWLDAYMG (110 aa). Positions 923-926 form a cross-link, isoglutamyl cysteine thioester (Cys-Gln); sequence CGEQ. An N-linked (GlcNAc...) asparagine glycan is attached at Asn1088. Ala1419 carries the GPI-anchor amidated alanine lipid modification. The propeptide at 1420–1442 is removed in mature form; it reads TDSLRRSSSLLVFCSVLLYFVQH.

Belongs to the protease inhibitor I39 (alpha-2-macroglobulin) family. In terms of assembly, heterodimer; disulfide-linked. Interacts with TGFB1 and TGFBR1. Forms a heteromeric complex with TGFBR1, TGFBR2 and TGFBR3 in a ligand-independent manner. In terms of processing, N-glycosylated. 2 forms of 150 (p150) and 120 kDa (p120) exist due to proteolytic degradation from a 180 kDa form.

The protein resides in the cell membrane. Modulates negatively TGFB1 signaling in keratinocytes. This chain is CD109 antigen (Cd109), found in Mus musculus (Mouse).